We begin with the raw amino-acid sequence, 98 residues long: NADH-ubiquinone oxidoreductase chain 4L (98 aa).

Transmembrane regions (helical) follow at residues 1-21 (MSLT…GLLM), 29-49 (SLLC…ITIL), and 61-81 (IILL…LVMV).

This sequence belongs to the complex I subunit 4L family. In terms of assembly, core subunit of respiratory chain NADH dehydrogenase (Complex I) which is composed of 45 different subunits.

Its subcellular location is the mitochondrion inner membrane. It carries out the reaction a ubiquinone + NADH + 5 H(+)(in) = a ubiquinol + NAD(+) + 4 H(+)(out). Its function is as follows. Core subunit of the mitochondrial membrane respiratory chain NADH dehydrogenase (Complex I) which catalyzes electron transfer from NADH through the respiratory chain, using ubiquinone as an electron acceptor. Part of the enzyme membrane arm which is embedded in the lipid bilayer and involved in proton translocation. In Artibeus jamaicensis (Jamaican fruit-eating bat), this protein is NADH-ubiquinone oxidoreductase chain 4L (MT-ND4L).